We begin with the raw amino-acid sequence, 254 residues long: MIIVISPAKSQNFEPIKTAYQFTQPIFKQQIIKLINILKHYEVEEIEKLMKISPKLAEEVFAKHNSFNPNKYDNSNAKAAIFTFNGDVYKGLEADTLDNKTIEYAQNHLLMLSGLYGLVRPLDLIQAYRLEMGTNIKIDGKILHKYWQDKITTQLNEYFSQQQNKILINLASNEYSQAIDKKSLAVKWLDIDFKENKAGAYKTIGIHAKKARGLMTRYILENRIENVSDIKKFNVAGYQFNPDFSDENLLCFTR.

It belongs to the UPF0246 family.

This is UPF0246 protein FTW_0267 from Francisella tularensis subsp. tularensis (strain WY96-3418).